A 255-amino-acid chain; its full sequence is Hydroxyacylglutathione hydrolase (255 aa).

Zn(2+) contacts are provided by H56, H58, D60, H61, H114, D133, and H171.

The protein belongs to the metallo-beta-lactamase superfamily. Glyoxalase II family. In terms of assembly, monomer. Requires Zn(2+) as cofactor.

The enzyme catalyses an S-(2-hydroxyacyl)glutathione + H2O = a 2-hydroxy carboxylate + glutathione + H(+). The protein operates within secondary metabolite metabolism; methylglyoxal degradation; (R)-lactate from methylglyoxal: step 2/2. Its function is as follows. Thiolesterase that catalyzes the hydrolysis of S-D-lactoyl-glutathione to form glutathione and D-lactic acid. The polypeptide is Hydroxyacylglutathione hydrolase (Chelativorans sp. (strain BNC1)).